We begin with the raw amino-acid sequence, 341 residues long: Anthranilate phosphoribosyltransferase (341 aa).

5-phospho-alpha-D-ribose 1-diphosphate-binding positions include glycine 81, 84-85 (GD), threonine 89, 91-94 (NIST), 109-117 (KHGSRSVSG), and serine 121. Position 81 (glycine 81) interacts with anthranilate. Residue serine 93 coordinates Mg(2+). Arginine 167 contributes to the anthranilate binding site. The Mg(2+) site is built by aspartate 226 and glutamate 227.

This sequence belongs to the anthranilate phosphoribosyltransferase family. Homodimer. The cofactor is Mg(2+).

It carries out the reaction N-(5-phospho-beta-D-ribosyl)anthranilate + diphosphate = 5-phospho-alpha-D-ribose 1-diphosphate + anthranilate. The protein operates within amino-acid biosynthesis; L-tryptophan biosynthesis; L-tryptophan from chorismate: step 2/5. Functionally, catalyzes the transfer of the phosphoribosyl group of 5-phosphorylribose-1-pyrophosphate (PRPP) to anthranilate to yield N-(5'-phosphoribosyl)-anthranilate (PRA). The protein is Anthranilate phosphoribosyltransferase of Methylococcus capsulatus (strain ATCC 33009 / NCIMB 11132 / Bath).